We begin with the raw amino-acid sequence, 635 residues long: Threonine--tRNA ligase (635 aa).

The region spanning 1 to 61 (MVSIRLPDGS…DHDVALAIVT (61 aa)) is the TGS domain. A catalytic region spans residues 242–533 (DHRKLGKQLD…LIEHHAGAMP (292 aa)). Residues Cys-333, His-384, and His-510 each contribute to the Zn(2+) site.

Belongs to the class-II aminoacyl-tRNA synthetase family. As to quaternary structure, homodimer. Requires Zn(2+) as cofactor.

It is found in the cytoplasm. The enzyme catalyses tRNA(Thr) + L-threonine + ATP = L-threonyl-tRNA(Thr) + AMP + diphosphate + H(+). Functionally, catalyzes the attachment of threonine to tRNA(Thr) in a two-step reaction: L-threonine is first activated by ATP to form Thr-AMP and then transferred to the acceptor end of tRNA(Thr). Also edits incorrectly charged L-seryl-tRNA(Thr). The polypeptide is Threonine--tRNA ligase (Paraburkholderia phytofirmans (strain DSM 17436 / LMG 22146 / PsJN) (Burkholderia phytofirmans)).